The primary structure comprises 431 residues: Enolase (431 aa).

Position 167 (Gln167) interacts with (2R)-2-phosphoglycerate. Glu209 serves as the catalytic Proton donor. Asp246, Glu289, and Asp316 together coordinate Mg(2+). The (2R)-2-phosphoglycerate site is built by Lys341, Arg370, Ser371, and Lys392. Lys341 functions as the Proton acceptor in the catalytic mechanism.

It belongs to the enolase family. In terms of assembly, component of the RNA degradosome, a multiprotein complex involved in RNA processing and mRNA degradation. Mg(2+) serves as cofactor.

The protein resides in the cytoplasm. The protein localises to the secreted. It localises to the cell surface. The enzyme catalyses (2R)-2-phosphoglycerate = phosphoenolpyruvate + H2O. The protein operates within carbohydrate degradation; glycolysis; pyruvate from D-glyceraldehyde 3-phosphate: step 4/5. In terms of biological role, catalyzes the reversible conversion of 2-phosphoglycerate (2-PG) into phosphoenolpyruvate (PEP). It is essential for the degradation of carbohydrates via glycolysis. The polypeptide is Enolase (Shewanella baltica (strain OS223)).